Consider the following 134-residue polypeptide: Small ribosomal subunit protein uS11 (134 aa).

Residues M1–T22 form a disordered region. Positions A9–N18 are enriched in basic residues.

The protein belongs to the universal ribosomal protein uS11 family. Part of the 30S ribosomal subunit. Interacts with proteins S7 and S18. Binds to IF-3.

Located on the platform of the 30S subunit, it bridges several disparate RNA helices of the 16S rRNA. Forms part of the Shine-Dalgarno cleft in the 70S ribosome. This chain is Small ribosomal subunit protein uS11, found in Kocuria rhizophila (strain ATCC 9341 / DSM 348 / NBRC 103217 / DC2201).